Consider the following 1262-residue polypeptide: Separin homolog sep-1 (1262 aa).

Residues 957–1051 (VQNAYYILDP…SVRTIPQALG (95 aa)) enclose the Peptidase C50 domain. Cysteine 1040 is a catalytic residue. The tract at residues 1147 to 1262 (KDQRNLPQTP…ARTPSRSRNL (116 aa)) is disordered. 2 stretches are compositionally biased toward polar residues: residues 1151-1162 (NLPQTPKTSART) and 1177-1197 (FVTS…NKSP). A compositionally biased stretch (low complexity) spans 1243–1262 (TPTTRTTRSSARTPSRSRNL).

In terms of assembly, forms a complex with securin-like protein ify-1 (via C-terminus). Interaction with ify-1 stabilizes sep-1. Also maintains the complex in the cytoplasm during interphase and recruits it to chromosomes during the first meiotic division. Expressed in oocytes. Expressed in male germline. Expressed in spermatocytes but undetectable in spermatids (at protein level).

The protein localises to the cytoplasm. Its subcellular location is the chromosome. The protein resides in the cytoplasmic granule. It is found in the cytoskeleton. It localises to the microtubule organizing center. The protein localises to the centrosome. Its subcellular location is the spindle. The protein resides in the cleavage furrow. It is found in the midbody. The enzyme catalyses All bonds known to be hydrolyzed by this endopeptidase have arginine in P1 and an acidic residue in P4. P6 is often occupied by an acidic residue or by a hydroxy-amino-acid residue, the phosphorylation of which enhances cleavage.. Probably maintained in an inactive state via its interaction with securin ify-1 which acts as a pseudosubstrate thereby blocking access to the catalytic site. Upon ify-1 degradation at the onset of anaphase, sep-1 is likely to become active. In addition, interaction with ify-1 stabilizes sep-1. Functionally, cysteine protease, which plays a central role in homologous chromosome separation during meiosis I and in sister chromatid separation during embryonic mitosis. Promotes chromosome/sister chromatid segregation by cleaving the scc-1 (mitosis) and rec-8 (meiosis) subunits of the cohesin complex at the onset of anaphase. May cleave histone H3-like protein cpar-1 during meiosis I metaphase-anaphase transition. Promotes cortical granule exocytosis after oocyte fertilization during the first meiotic anaphase. Essential for embryonic cytokinesis by regulating rab-11-positive vesicle trafficking at the plasma membrane at the cleavage furrow and midbody. Regulates centriole segregation during spermatocyte meiosis. Required for embryonic anterior-posterior axis formation. The sequence is that of Separin homolog sep-1 from Caenorhabditis elegans.